We begin with the raw amino-acid sequence, 221 residues long: Probable septum site-determining protein MinC (221 aa).

This sequence belongs to the MinC family. In terms of assembly, interacts with MinD and FtsZ.

Its function is as follows. Cell division inhibitor that blocks the formation of polar Z ring septums. Rapidly oscillates between the poles of the cell to destabilize FtsZ filaments that have formed before they mature into polar Z rings. Prevents FtsZ polymerization. This Shewanella loihica (strain ATCC BAA-1088 / PV-4) protein is Probable septum site-determining protein MinC.